An 821-amino-acid polypeptide reads, in one-letter code: Ent-isokaur-15-ene synthase (821 aa).

Positions 556, 560, 701, 705, and 709 each coordinate Mg(2+). The DDXXD motif signature appears at 556–560 (DDFFD).

This sequence belongs to the terpene synthase family. It depends on Mg(2+) as a cofactor.

It catalyses the reaction ent-copalyl diphosphate = ent-isokaurene + diphosphate. It participates in secondary metabolite biosynthesis; terpenoid biosynthesis. Its function is as follows. Involved in the biosynthesis of ent-kaurene diterpenoids natural products. Catalyzes the conversion of ent-copalyl diphosphate to the phytoalexin precursor ent-isokaur-15-ene. The chain is Ent-isokaur-15-ene synthase from Oryza sativa subsp. indica (Rice).